An 84-amino-acid polypeptide reads, in one-letter code: Exodeoxyribonuclease 7 small subunit (84 aa).

This sequence belongs to the XseB family. As to quaternary structure, heterooligomer composed of large and small subunits.

Its subcellular location is the cytoplasm. The catalysed reaction is Exonucleolytic cleavage in either 5'- to 3'- or 3'- to 5'-direction to yield nucleoside 5'-phosphates.. Functionally, bidirectionally degrades single-stranded DNA into large acid-insoluble oligonucleotides, which are then degraded further into small acid-soluble oligonucleotides. The protein is Exodeoxyribonuclease 7 small subunit of Bartonella henselae (strain ATCC 49882 / DSM 28221 / CCUG 30454 / Houston 1) (Rochalimaea henselae).